The chain runs to 317 residues: Acetyl-coenzyme A carboxylase carboxyl transferase subunit alpha (317 aa).

A CoA carboxyltransferase C-terminal domain is found at 31-292; it reads RFEPELAQLE…DKALWATLTS (262 aa).

Belongs to the AccA family. In terms of assembly, acetyl-CoA carboxylase is a heterohexamer composed of biotin carboxyl carrier protein (AccB), biotin carboxylase (AccC) and two subunits each of ACCase subunit alpha (AccA) and ACCase subunit beta (AccD).

It localises to the cytoplasm. The catalysed reaction is N(6)-carboxybiotinyl-L-lysyl-[protein] + acetyl-CoA = N(6)-biotinyl-L-lysyl-[protein] + malonyl-CoA. It participates in lipid metabolism; malonyl-CoA biosynthesis; malonyl-CoA from acetyl-CoA: step 1/1. Its function is as follows. Component of the acetyl coenzyme A carboxylase (ACC) complex. First, biotin carboxylase catalyzes the carboxylation of biotin on its carrier protein (BCCP) and then the CO(2) group is transferred by the carboxyltransferase to acetyl-CoA to form malonyl-CoA. The polypeptide is Acetyl-coenzyme A carboxylase carboxyl transferase subunit alpha (Sorangium cellulosum (strain So ce56) (Polyangium cellulosum (strain So ce56))).